The primary structure comprises 195 residues: Protein GrpE (195 aa).

Residues 1–60 are disordered; it reads MAKDEEKNSQASAAPNEGEVKAKQEQTSAKEPAAKAGETEKVADLQKQVEELTKQLDDQK. The span at 37–60 shows a compositional bias: basic and acidic residues; it reads GETEKVADLQKQVEELTKQLDDQK.

The protein belongs to the GrpE family. In terms of assembly, homodimer.

It localises to the cytoplasm. Participates actively in the response to hyperosmotic and heat shock by preventing the aggregation of stress-denatured proteins, in association with DnaK and GrpE. It is the nucleotide exchange factor for DnaK and may function as a thermosensor. Unfolded proteins bind initially to DnaJ; upon interaction with the DnaJ-bound protein, DnaK hydrolyzes its bound ATP, resulting in the formation of a stable complex. GrpE releases ADP from DnaK; ATP binding to DnaK triggers the release of the substrate protein, thus completing the reaction cycle. Several rounds of ATP-dependent interactions between DnaJ, DnaK and GrpE are required for fully efficient folding. This Limosilactobacillus fermentum (strain NBRC 3956 / LMG 18251) (Lactobacillus fermentum) protein is Protein GrpE.